The sequence spans 341 residues: L-threonine 3-dehydrogenase (341 aa).

Cys-38 is a binding site for Zn(2+). Residues Thr-40 and His-43 each act as charge relay system in the active site. His-63, Glu-64, Cys-93, Cys-96, Cys-99, and Cys-107 together coordinate Zn(2+). Residues Ile-175, Asp-195, Arg-200, 262–264 (LGI), and 286–287 (IY) contribute to the NAD(+) site.

The protein belongs to the zinc-containing alcohol dehydrogenase family. In terms of assembly, homotetramer. The cofactor is Zn(2+).

It is found in the cytoplasm. It carries out the reaction L-threonine + NAD(+) = (2S)-2-amino-3-oxobutanoate + NADH + H(+). Its pathway is amino-acid degradation; L-threonine degradation via oxydo-reductase pathway; glycine from L-threonine: step 1/2. Its function is as follows. Catalyzes the NAD(+)-dependent oxidation of L-threonine to 2-amino-3-ketobutyrate. This is L-threonine 3-dehydrogenase from Yersinia pseudotuberculosis serotype O:1b (strain IP 31758).